Consider the following 690-residue polypeptide: Eukaryotic translation initiation factor 3 subunit B (690 aa).

Positions 1 to 11 (MAKKKSEEHSG) are enriched in basic and acidic residues. The interval 1–33 (MAKKKSEEHSGADANDSDYNEEPNFDDPPGYVD) is disordered. Residues 15 to 25 (NDSDYNEEPNF) show a composition bias toward acidic residues. Positions 57–141 (SVVVVDNMPK…YTFAVNLFTD (85 aa)) constitute an RRM domain. WD repeat units lie at residues 207 to 246 (TRERFTDTFVKWSPLGTYVVTFHKPGVAIWGGSSFQKIQK), 292 to 331 (GDGMSVLSMFRWSHDDKFVARMGENSIHIYETPSFYLLDL), 334 to 369 (IKIAGIRGFSWSPTDNVIAYWVEEQNQIPARVTLME), 442 to 484 (EIRE…KPSL), and 530 to 575 (PDHF…IRRT). Positions 613-646 (EQKDRLRLTRASKELLEKRAQLRETFMEYRNKRI) form a coiled coil.

This sequence belongs to the eIF-3 subunit B family. Component of the eukaryotic translation initiation factor 3 (eIF-3) complex. The eIF-3 complex interacts with pix. Interacts with mxt.

The protein localises to the cytoplasm. RNA-binding component of the eukaryotic translation initiation factor 3 (eIF-3) complex, which is involved in protein synthesis of a specialized repertoire of mRNAs and, together with other initiation factors, stimulates binding of mRNA and methionyl-tRNAi to the 40S ribosome. The eIF-3 complex specifically targets and initiates translation of a subset of mRNAs involved in cell proliferation. The polypeptide is Eukaryotic translation initiation factor 3 subunit B (Drosophila mojavensis (Fruit fly)).